A 247-amino-acid polypeptide reads, in one-letter code: Type III pantothenate kinase (247 aa).

Residue 6–13 (DVGNTSIY) participates in ATP binding. Residue 102–105 (GADL) participates in substrate binding. Asp104 serves as the catalytic Proton acceptor. Position 122 (Asp122) interacts with K(+). Thr125 provides a ligand contact to ATP. Thr176 lines the substrate pocket.

Belongs to the type III pantothenate kinase family. Homodimer. It depends on NH4(+) as a cofactor. The cofactor is K(+).

It localises to the cytoplasm. It catalyses the reaction (R)-pantothenate + ATP = (R)-4'-phosphopantothenate + ADP + H(+). Its pathway is cofactor biosynthesis; coenzyme A biosynthesis; CoA from (R)-pantothenate: step 1/5. Functionally, catalyzes the phosphorylation of pantothenate (Pan), the first step in CoA biosynthesis. The protein is Type III pantothenate kinase of Acholeplasma laidlawii (strain PG-8A).